We begin with the raw amino-acid sequence, 363 residues long: 3-isopropylmalate dehydrogenase (363 aa).

78–91 contributes to the NAD(+) binding site; the sequence is XXXXXXXXXXXXXX. Substrate is bound by residues Arg-99, Arg-109, Arg-138, and Asp-227. Residues Asp-227, Asp-251, and Asp-255 each contribute to the Mg(2+) site. 285–297 contacts NAD(+); sequence GSAPDIEGKNIAN.

It belongs to the isocitrate and isopropylmalate dehydrogenases family. LeuB type 1 subfamily. As to quaternary structure, homodimer. Mg(2+) is required as a cofactor. It depends on Mn(2+) as a cofactor.

It localises to the cytoplasm. It catalyses the reaction (2R,3S)-3-isopropylmalate + NAD(+) = 4-methyl-2-oxopentanoate + CO2 + NADH. The protein operates within amino-acid biosynthesis; L-leucine biosynthesis; L-leucine from 3-methyl-2-oxobutanoate: step 3/4. In terms of biological role, catalyzes the oxidation of 3-carboxy-2-hydroxy-4-methylpentanoate (3-isopropylmalate) to 3-carboxy-4-methyl-2-oxopentanoate. The product decarboxylates to 4-methyl-2 oxopentanoate. This is 3-isopropylmalate dehydrogenase from Buchnera aphidicola subsp. Uroleucon solidaginis.